The following is a 264-amino-acid chain: 2',3'-cyclic-nucleotide 2'-phosphodiesterase (264 aa).

Aspartate 8, glutamate 39, asparagine 40, and asparagine 67 together coordinate Fe cation. The Proton donor role is filled by histidine 68. Residues histidine 150, histidine 175, and histidine 177 each coordinate Fe cation.

This sequence belongs to the YmdB-like family. As to quaternary structure, homodimer. It depends on Fe(2+) as a cofactor. Requires Fe(3+) as cofactor.

The protein resides in the cytoplasm. It carries out the reaction a nucleoside 2',3'-cyclic phosphate + H2O = a nucleoside 3'-phosphate + H(+). Functionally, plays a central, regulatory role in the late adaptive responses and affects the levels of many genes. May act via regulation of cAMP levels. Decreases the expression of motility genes and induces genes involved in biofilm formation, by controlling the expression of SlrR. Required for formation of intercellular nanotubes that bridge neighboring cells to allow molecular exchange. Plays a key role in directing the early stages of colony development. In vitro, has a metal-dependent phosphodiesterase activity against 2',3'-cAMP and 2',3'-cGMP. Also has 3',5'-cyclic-nucleotide phosphodiesterase activity, but cannot use cyclic di-AMP or cyclic di-GMP, and does not have phosphatase activity. The chain is 2',3'-cyclic-nucleotide 2'-phosphodiesterase (ymdB) from Bacillus subtilis (strain 168).